A 188-amino-acid polypeptide reads, in one-letter code: Guanylate kinase (188 aa).

The Guanylate kinase-like domain maps to 4–183 (RNIVVLTAPS…AVEETLTRIR (180 aa)). 11–18 (APSGAGKT) is a binding site for ATP.

Belongs to the guanylate kinase family.

It is found in the cytoplasm. The catalysed reaction is GMP + ATP = GDP + ADP. In terms of biological role, essential for recycling GMP and indirectly, cGMP. This is Guanylate kinase from Salinibacter ruber (strain DSM 13855 / M31).